Reading from the N-terminus, the 460-residue chain is GTPase Der (460 aa).

EngA-type G domains follow at residues 2–166 (KTIA…AEER) and 175–353 (TRIA…QERK). Residues 8–15 (GRPNVGKS), 55–59 (DTGGL), 118–121 (NKLD), 181–188 (GQPNAGKS), 228–232 (DTAGL), and 293–296 (NKID) contribute to the GTP site. The KH-like domain maps to 354–446 (KRIPTHRLTQ…LLWKWRKAEG (93 aa)).

This sequence belongs to the TRAFAC class TrmE-Era-EngA-EngB-Septin-like GTPase superfamily. EngA (Der) GTPase family. In terms of assembly, associates with the 50S ribosomal subunit.

In terms of biological role, GTPase that plays an essential role in the late steps of ribosome biogenesis. In Methylacidiphilum infernorum (isolate V4) (Methylokorus infernorum (strain V4)), this protein is GTPase Der.